Consider the following 334-residue polypeptide: Beta-ketoacyl-[acyl-carrier-protein] synthase III (334 aa).

Active-site residues include Cys-114 and His-253. An ACP-binding region spans residues 254 to 258 (QANIR). Asn-283 is a catalytic residue.

The protein belongs to the thiolase-like superfamily. FabH family. As to quaternary structure, homodimer.

The protein localises to the cytoplasm. It carries out the reaction malonyl-[ACP] + acetyl-CoA + H(+) = 3-oxobutanoyl-[ACP] + CO2 + CoA. The protein operates within lipid metabolism; fatty acid biosynthesis. Functionally, catalyzes the condensation reaction of fatty acid synthesis by the addition to an acyl acceptor of two carbons from malonyl-ACP. Catalyzes the first condensation reaction which initiates fatty acid synthesis and may therefore play a role in governing the total rate of fatty acid production. Possesses both acetoacetyl-ACP synthase and acetyl transacylase activities. Its substrate specificity determines the biosynthesis of branched-chain and/or straight-chain of fatty acids. This chain is Beta-ketoacyl-[acyl-carrier-protein] synthase III, found in Campylobacter concisus (strain 13826).